Here is a 124-residue protein sequence, read N- to C-terminus: Small ribosomal subunit protein uS12 (124 aa).

A 3-methylthioaspartic acid modification is found at Asp89.

The protein belongs to the universal ribosomal protein uS12 family. In terms of assembly, part of the 30S ribosomal subunit. Contacts proteins S8 and S17. May interact with IF1 in the 30S initiation complex.

Functionally, with S4 and S5 plays an important role in translational accuracy. In terms of biological role, interacts with and stabilizes bases of the 16S rRNA that are involved in tRNA selection in the A site and with the mRNA backbone. Located at the interface of the 30S and 50S subunits, it traverses the body of the 30S subunit contacting proteins on the other side and probably holding the rRNA structure together. The combined cluster of proteins S8, S12 and S17 appears to hold together the shoulder and platform of the 30S subunit. The sequence is that of Small ribosomal subunit protein uS12 from Aliivibrio salmonicida (strain LFI1238) (Vibrio salmonicida (strain LFI1238)).